The chain runs to 401 residues: F-box protein At1g69090 (401 aa).

Residues 1 to 23 (MASPTLALAQSPPPKSPAVSVSQ) are disordered. An F-box domain is found at 27–74 (HCWSKLPLDLMQLVFERLAFLDFERAKSVCSSWQFGSKQSKPNNQIPW).

This is F-box protein At1g69090 from Arabidopsis thaliana (Mouse-ear cress).